Reading from the N-terminus, the 464-residue chain is UDP-N-acetylmuramoylalanine--D-glutamate ligase (464 aa).

Residue 127–133 participates in ATP binding; it reads GSNGKST.

Belongs to the MurCDEF family.

The protein resides in the cytoplasm. The catalysed reaction is UDP-N-acetyl-alpha-D-muramoyl-L-alanine + D-glutamate + ATP = UDP-N-acetyl-alpha-D-muramoyl-L-alanyl-D-glutamate + ADP + phosphate + H(+). It functions in the pathway cell wall biogenesis; peptidoglycan biosynthesis. Its function is as follows. Cell wall formation. Catalyzes the addition of glutamate to the nucleotide precursor UDP-N-acetylmuramoyl-L-alanine (UMA). The polypeptide is UDP-N-acetylmuramoylalanine--D-glutamate ligase (Dinoroseobacter shibae (strain DSM 16493 / NCIMB 14021 / DFL 12)).